Reading from the N-terminus, the 283-residue chain is Lipoyl synthase (283 aa).

The [4Fe-4S] cluster site is built by C35, C40, C46, C61, C65, C68, and S273. The region spanning 47-262 is the Radical SAM core domain; sequence FRSRQATFLI…RERALAMGFK (216 aa).

It belongs to the radical SAM superfamily. Lipoyl synthase family. Requires [4Fe-4S] cluster as cofactor.

It is found in the cytoplasm. It catalyses the reaction [[Fe-S] cluster scaffold protein carrying a second [4Fe-4S](2+) cluster] + N(6)-octanoyl-L-lysyl-[protein] + 2 oxidized [2Fe-2S]-[ferredoxin] + 2 S-adenosyl-L-methionine + 4 H(+) = [[Fe-S] cluster scaffold protein] + N(6)-[(R)-dihydrolipoyl]-L-lysyl-[protein] + 4 Fe(3+) + 2 hydrogen sulfide + 2 5'-deoxyadenosine + 2 L-methionine + 2 reduced [2Fe-2S]-[ferredoxin]. Its pathway is protein modification; protein lipoylation via endogenous pathway; protein N(6)-(lipoyl)lysine from octanoyl-[acyl-carrier-protein]: step 2/2. Catalyzes the radical-mediated insertion of two sulfur atoms into the C-6 and C-8 positions of the octanoyl moiety bound to the lipoyl domains of lipoate-dependent enzymes, thereby converting the octanoylated domains into lipoylated derivatives. This chain is Lipoyl synthase, found in Geotalea uraniireducens (strain Rf4) (Geobacter uraniireducens).